Consider the following 582-residue polypeptide: 2-succinyl-5-enolpyruvyl-6-hydroxy-3-cyclohexene-1-carboxylate synthase (582 aa).

This sequence belongs to the TPP enzyme family. MenD subfamily. Homodimer. Mg(2+) serves as cofactor. It depends on Mn(2+) as a cofactor. Thiamine diphosphate is required as a cofactor.

It catalyses the reaction isochorismate + 2-oxoglutarate + H(+) = 5-enolpyruvoyl-6-hydroxy-2-succinyl-cyclohex-3-ene-1-carboxylate + CO2. It functions in the pathway quinol/quinone metabolism; 1,4-dihydroxy-2-naphthoate biosynthesis; 1,4-dihydroxy-2-naphthoate from chorismate: step 2/7. It participates in cofactor biosynthesis; phylloquinone biosynthesis. In terms of biological role, catalyzes the thiamine diphosphate-dependent decarboxylation of 2-oxoglutarate and the subsequent addition of the resulting succinic semialdehyde-thiamine pyrophosphate anion to isochorismate to yield 2-succinyl-5-enolpyruvyl-6-hydroxy-3-cyclohexene-1-carboxylate (SEPHCHC). This is 2-succinyl-5-enolpyruvyl-6-hydroxy-3-cyclohexene-1-carboxylate synthase from Prochlorococcus marinus (strain MIT 9313).